The sequence spans 150 residues: Actin-depolymerizing factor 3 (150 aa).

Positions 7–150 (GVAVSEECKA…TLDVLKDHTS (144 aa)) constitute an ADF-H domain.

It belongs to the actin-binding proteins ADF family.

Functionally, actin-depolymerizing protein. Severs actin filaments (F-actin) and binds to actin monomers. The chain is Actin-depolymerizing factor 3 (ADF3) from Oryza sativa subsp. japonica (Rice).